The following is a 165-amino-acid chain: Lipoprotein signal peptidase (165 aa).

A run of 3 helical transmembrane segments spans residues 12–32 (WLWLVVVVLIVDLGSKALILQ), 70–90 (WFFAGIAIGICVLLVVMMYRA), and 102–122 (ALIIGGALGNLFDRLWHGFVV). Residues D123 and D141 contribute to the active site. A helical membrane pass occupies residues 137–157 (FNLADTAICIGAALVVLEGFL).

The protein belongs to the peptidase A8 family.

The protein localises to the cell inner membrane. The catalysed reaction is Release of signal peptides from bacterial membrane prolipoproteins. Hydrolyzes -Xaa-Yaa-Zaa-|-(S,diacylglyceryl)Cys-, in which Xaa is hydrophobic (preferably Leu), and Yaa (Ala or Ser) and Zaa (Gly or Ala) have small, neutral side chains.. It participates in protein modification; lipoprotein biosynthesis (signal peptide cleavage). This protein specifically catalyzes the removal of signal peptides from prolipoproteins. The sequence is that of Lipoprotein signal peptidase from Cronobacter sakazakii (strain ATCC BAA-894) (Enterobacter sakazakii).